The following is a 740-amino-acid chain: NAD(P)H-quinone oxidoreductase subunit 5, chloroplastic (740 aa).

Helical transmembrane passes span 9–29 (WIIP…LFLF), 40–60 (WAFQ…YLSI), 89–109 (IDPL…MVLI), 125–145 (FAYM…SNLI), 147–167 (IYIF…FWFT), 185–205 (GDFG…SFEF), 219–239 (NEVD…GAVA), 258–278 (TPIS…FLVA), 286–306 (VIPY…LLGA), 327–347 (LGYM…FHLI), 354–374 (ALLF…VGYS), 396–416 (ITFL…CFWS), 425–445 (WLYS…TAFY), 543–563 (LFPI…GIPF), 602–622 (VLSV…YKPI), and 717–737 (SYLF…YLLF).

Belongs to the complex I subunit 5 family. As to quaternary structure, NDH is composed of at least 16 different subunits, 5 of which are encoded in the nucleus.

The protein localises to the plastid. The protein resides in the chloroplast thylakoid membrane. It carries out the reaction a plastoquinone + NADH + (n+1) H(+)(in) = a plastoquinol + NAD(+) + n H(+)(out). The catalysed reaction is a plastoquinone + NADPH + (n+1) H(+)(in) = a plastoquinol + NADP(+) + n H(+)(out). Functionally, NDH shuttles electrons from NAD(P)H:plastoquinone, via FMN and iron-sulfur (Fe-S) centers, to quinones in the photosynthetic chain and possibly in a chloroplast respiratory chain. The immediate electron acceptor for the enzyme in this species is believed to be plastoquinone. Couples the redox reaction to proton translocation, and thus conserves the redox energy in a proton gradient. In Nicotiana sylvestris (Wood tobacco), this protein is NAD(P)H-quinone oxidoreductase subunit 5, chloroplastic (ndhF).